The sequence spans 503 residues: Geissoschizine oxidase (503 aa).

The helical transmembrane segment at 7–27 (FSSPSFFFLLPFLFLLIKPLI) threads the bilayer. Position 441 (Cys441) interacts with heme.

It belongs to the cytochrome P450 family. Heme is required as a cofactor.

It localises to the membrane. It carries out the reaction (19E)-geissoschizine + reduced [NADPH--hemoprotein reductase] + O2 = akuammicine + formate + oxidized [NADPH--hemoprotein reductase] + H2O + H(+). The catalysed reaction is (19E)-geissoschizine + reduced [NADPH--hemoprotein reductase] + O2 = 3,17-didehydrostemmadenine + oxidized [NADPH--hemoprotein reductase] + 2 H2O. The enzyme catalyses 3,17-didehydrostemmadenine = 17-dehydropreakuammicine. It participates in alkaloid biosynthesis. Its function is as follows. Monooxygenase involved in the biosynthesis of curare monoterpene indole alkaloids (MIAs), natural products such as diaboline, a pharmacologically active compound used to regulate blood pressure. Curare alkaloids act as animal glycine receptor antagonists. Catalyzes the conversion of geissoschizine to dehydropreakuammicine by cyclization, which is spontaneously converted into akuammicine by aromatization. The chain is Geissoschizine oxidase from Strychnos sp.